A 378-amino-acid polypeptide reads, in one-letter code: Odorant receptor Or2 (378 aa).

Position 1 (Met1) is a topological domain, cytoplasmic. A helical transmembrane segment spans residues 2–22 (LIEECPIIGVNVRVWLFWSYL). At 23–29 (RRPRLSR) the chain is on the extracellular side. Residues 30-50 (FLVGCIPVAVLNVFQFLKLYS) traverse the membrane as a helical segment. Residues 51–59 (SWGDMSELI) lie on the Cytoplasmic side of the membrane. Residues 60–80 (INGYFTVLYFNLVLRTSFLVI) form a helical membrane-spanning segment. At 81–120 (NRRKFETFFEGVAAEYALLEKNDDIRPVLERYTRRGRMLS) the chain is on the extracellular side. The helical transmembrane segment at 121-141 (ISNLWLGAFISACFVTYPLFV) threads the bilayer. At 142–164 (PGRGLPYGVTIPGVDVLATPTYQ) the chain is on the cytoplasmic side. Residues 165-185 (VVFVLQVYLTFPACCMYIPFT) traverse the membrane as a helical segment. Over 186–254 (SFYATCTLFA…HDLNSLVTHL (69 aa)) the chain is Extracellular. Residues 255-275 (CLLEFLSFGMMLCALLFLLSI) traverse the membrane as a helical segment. Over 276–278 (SNQ) the chain is Cytoplasmic. Residues 279 to 299 (LAQMIMIGSYIFMILSQMFAF) form a helical membrane-spanning segment. Residues 300-378 (YWHANEVLEQ…YFTLLRRVYN (79 aa)) are Extracellular-facing. Asn364 is a glycosylation site (N-linked (GlcNAc...) asparagine).

Belongs to the insect chemoreceptor superfamily. Heteromeric odorant receptor channel (TC 1.A.69) family. Or30a subfamily. As to expression, expressed in male and female antennae and maxillary palps.

It localises to the cell membrane. In terms of biological role, odorant receptor which plays a critical role in the anthropophilic host-seeking behavior; establishes the host preference to transmit malaria. This Anopheles gambiae (African malaria mosquito) protein is Odorant receptor Or2 (OR2).